A 301-amino-acid polypeptide reads, in one-letter code: Probable tRNA pseudouridine synthase B (301 aa).

Asp54 serves as the catalytic Nucleophile. The PUA domain occupies 227–301; the sequence is LPRLTIADSA…VVVALERVLV (75 aa).

It belongs to the pseudouridine synthase TruB family. Type 2 subfamily.

The catalysed reaction is uridine(55) in tRNA = pseudouridine(55) in tRNA. Could be responsible for synthesis of pseudouridine from uracil-55 in the psi GC loop of transfer RNAs. This Halobacterium salinarum (strain ATCC 29341 / DSM 671 / R1) protein is Probable tRNA pseudouridine synthase B.